The chain runs to 940 residues: DNA gyrase subunit A (940 aa).

The tract at residues 1-22 is disordered; that stretch reads MSDHTNPPSAPPDDDPNGGSLL. The Topo IIA-type catalytic domain maps to 48-538; that stretch reads LPDARDGLKP…SLADQDDESL (491 aa). The active-site O-(5'-phospho-DNA)-tyrosine intermediate is Y136. The short motif at 565-571 is the GyrA-box element; the sequence is QHRGGRG. The span at 914 to 924 shows a compositional bias: acidic residues; it reads ESVDDNGDDAD. Positions 914-940 are disordered; it reads ESVDDNGDDADSVAPAAPDGQVTDSDD.

Belongs to the type II topoisomerase GyrA/ParC subunit family. In terms of assembly, heterotetramer, composed of two GyrA and two GyrB chains. In the heterotetramer, GyrA contains the active site tyrosine that forms a transient covalent intermediate with DNA, while GyrB binds cofactors and catalyzes ATP hydrolysis.

The protein resides in the cytoplasm. The enzyme catalyses ATP-dependent breakage, passage and rejoining of double-stranded DNA.. Functionally, a type II topoisomerase that negatively supercoils closed circular double-stranded (ds) DNA in an ATP-dependent manner to modulate DNA topology and maintain chromosomes in an underwound state. Negative supercoiling favors strand separation, and DNA replication, transcription, recombination and repair, all of which involve strand separation. Also able to catalyze the interconversion of other topological isomers of dsDNA rings, including catenanes and knotted rings. Type II topoisomerases break and join 2 DNA strands simultaneously in an ATP-dependent manner. The polypeptide is DNA gyrase subunit A (Granulibacter bethesdensis (strain ATCC BAA-1260 / CGDNIH1)).